The sequence spans 311 residues: Lipoyl synthase (311 aa).

[4Fe-4S] cluster is bound by residues C55, C60, C66, C81, C85, C88, and S292. The region spanning W67–A281 is the Radical SAM core domain.

Belongs to the radical SAM superfamily. Lipoyl synthase family. The cofactor is [4Fe-4S] cluster.

Its subcellular location is the cytoplasm. The catalysed reaction is [[Fe-S] cluster scaffold protein carrying a second [4Fe-4S](2+) cluster] + N(6)-octanoyl-L-lysyl-[protein] + 2 oxidized [2Fe-2S]-[ferredoxin] + 2 S-adenosyl-L-methionine + 4 H(+) = [[Fe-S] cluster scaffold protein] + N(6)-[(R)-dihydrolipoyl]-L-lysyl-[protein] + 4 Fe(3+) + 2 hydrogen sulfide + 2 5'-deoxyadenosine + 2 L-methionine + 2 reduced [2Fe-2S]-[ferredoxin]. It participates in protein modification; protein lipoylation via endogenous pathway; protein N(6)-(lipoyl)lysine from octanoyl-[acyl-carrier-protein]: step 2/2. Its function is as follows. Catalyzes the radical-mediated insertion of two sulfur atoms into the C-6 and C-8 positions of the octanoyl moiety bound to the lipoyl domains of lipoate-dependent enzymes, thereby converting the octanoylated domains into lipoylated derivatives. This is Lipoyl synthase from Mycobacterium bovis (strain ATCC BAA-935 / AF2122/97).